We begin with the raw amino-acid sequence, 566 residues long: Putative lipase ATG15 (566 aa).

The Cytoplasmic segment spans residues 1 to 17 (MGSKHKKNASKSLRAFS). Residues 18-38 (FIILSASIALVYIFNPVKLIF) traverse the membrane as a helical; Signal-anchor for type II membrane protein segment. Over 39 to 566 (PSSIIRFHHG…CVEWGDEEDA (528 aa)) the chain is Lumenal. Asparagine 264 and asparagine 348 each carry an N-linked (GlcNAc...) asparagine glycan. Serine 366 (charge relay system) is an active-site residue. Asparagine 483 is a glycosylation site (N-linked (GlcNAc...) asparagine). The tract at residues 507–545 (DSLDDEPPLPNPLRPGKPSTTSSSQHHTSTTTTTETSRP) is disordered. The segment covering 522–543 (GKPSTTSSSQHHTSTTTTTETS) has biased composition (low complexity).

The protein belongs to the AB hydrolase superfamily. Lipase family. As to quaternary structure, binds to both phosphatidylinositol (PI) and phosphatidylinositol 3,5-bisphosphate (PIP2).

It is found in the endosome. The protein localises to the multivesicular body membrane. It localises to the prevacuolar compartment membrane. It catalyses the reaction a triacylglycerol + H2O = a diacylglycerol + a fatty acid + H(+). Lipase which is essential for lysis of subvacuolar cytoplasm to vacuole targeted bodies and intravacuolar autophagic bodies. Involved in the lysis of intravacuolar multivesicular body (MVB) vesicles. The intravacuolar membrane disintegration by ATG15 is critical to life span extension. This chain is Putative lipase ATG15 (ATG15), found in Meyerozyma guilliermondii (strain ATCC 6260 / CBS 566 / DSM 6381 / JCM 1539 / NBRC 10279 / NRRL Y-324) (Yeast).